Consider the following 196-residue polypeptide: Peroxynitrite isomerase (196 aa).

Positions 1 to 29 (MSDENPLQPPWLNAPPVDPYPYEESHDLR) are disordered. The segment covering 7 to 19 (LQPPWLNAPPVDP) has biased composition (pro residues). The GXWXGXG motif lies at 46 to 52 (GVWRGRG). His-186 is a binding site for heme b.

The protein belongs to the nitrobindin family. Homodimer. The cofactor is heme b.

The enzyme catalyses peroxynitrite = nitrate. It functions in the pathway nitrogen metabolism. Functionally, heme-binding protein able to scavenge peroxynitrite and to protect free L-tyrosine against peroxynitrite-mediated nitration, by acting as a peroxynitrite isomerase that converts peroxynitrite to nitrate. Therefore, this protein likely plays a role in peroxynitrite sensing and in the detoxification of reactive nitrogen and oxygen species (RNS and ROS, respectively). Is able to bind nitric oxide (NO) in vitro, but may act as a sensor of peroxynitrite levels in vivo. The polypeptide is Peroxynitrite isomerase (Salinispora arenicola (strain CNS-205)).